Here is a 178-residue protein sequence, read N- to C-terminus: Interleukin-10 (178 aa).

The signal sequence occupies residues 1-18 (MHSSALLCCLVLLTGVRA). Intrachain disulfides connect cysteine 30/cysteine 126 and cysteine 80/cysteine 132. A glycan (N-linked (GlcNAc...) asparagine) is linked at asparagine 134.

Belongs to the IL-10 family. As to quaternary structure, homodimer. Interacts with IL10RA and IL10RB.

It localises to the secreted. Major immune regulatory cytokine that acts on many cells of the immune system where it has profound anti-inflammatory functions, limiting excessive tissue disruption caused by inflammation. Mechanistically, IL10 binds to its heterotetrameric receptor comprising IL10RA and IL10RB leading to JAK1 and STAT2-mediated phosphorylation of STAT3. In turn, STAT3 translocates to the nucleus where it drives expression of anti-inflammatory mediators. Targets antigen-presenting cells (APCs) such as macrophages and monocytes and inhibits their release of pro-inflammatory cytokines including granulocyte-macrophage colony-stimulating factor /GM-CSF, granulocyte colony-stimulating factor/G-CSF, IL-1 alpha, IL-1 beta, IL-6, IL-8 and TNF-alpha. Also interferes with antigen presentation by reducing the expression of MHC-class II and co-stimulatory molecules, thereby inhibiting their ability to induce T cell activation. In addition, controls the inflammatory response of macrophages by reprogramming essential metabolic pathways including mTOR signaling. This is Interleukin-10 (IL10) from Macaca mulatta (Rhesus macaque).